Here is a 219-residue protein sequence, read N- to C-terminus: Isovaleryl-homoserine lactone synthase (219 aa).

The protein belongs to the autoinducer synthase family.

It catalyses the reaction 3-methylbutanoyl-CoA + S-adenosyl-L-methionine = N-isovaleryl-L-homoserine lactone + S-methyl-5'-thioadenosine + CoA + H(+). Catalyzes the synthesis of IV-HSL (isovaleryl-homoserine lactone), a quorum-sensing (QS) autoinducer molecule which binds to BjaR1 transcriptional regulator to activate expression of QS-dependent genes. Is active with isovaleryl-CoA but cannot use isovaleryl-ACP as acyl donor. The chain is Isovaleryl-homoserine lactone synthase (bjaI) from Bradyrhizobium diazoefficiens (strain JCM 10833 / BCRC 13528 / IAM 13628 / NBRC 14792 / USDA 110).